The sequence spans 177 residues: Nucleoside-triphosphatase THEP1 (177 aa).

ATP-binding positions include 10 to 17 (GKPGIGKT) and 101 to 108 (CLVIDEIG).

The protein belongs to the THEP1 NTPase family.

The catalysed reaction is a ribonucleoside 5'-triphosphate + H2O = a ribonucleoside 5'-diphosphate + phosphate + H(+). Has nucleotide phosphatase activity towards ATP, GTP, CTP, TTP and UTP. May hydrolyze nucleoside diphosphates with lower efficiency. This Natranaerobius thermophilus (strain ATCC BAA-1301 / DSM 18059 / JW/NM-WN-LF) protein is Nucleoside-triphosphatase THEP1.